We begin with the raw amino-acid sequence, 284 residues long: 2-dehydro-3-deoxyphosphooctonate aldolase (284 aa).

The protein belongs to the KdsA family.

It localises to the cytoplasm. It carries out the reaction D-arabinose 5-phosphate + phosphoenolpyruvate + H2O = 3-deoxy-alpha-D-manno-2-octulosonate-8-phosphate + phosphate. The protein operates within carbohydrate biosynthesis; 3-deoxy-D-manno-octulosonate biosynthesis; 3-deoxy-D-manno-octulosonate from D-ribulose 5-phosphate: step 2/3. Its pathway is bacterial outer membrane biogenesis; lipopolysaccharide biosynthesis. The polypeptide is 2-dehydro-3-deoxyphosphooctonate aldolase (Burkholderia vietnamiensis (strain G4 / LMG 22486) (Burkholderia cepacia (strain R1808))).